The following is a 258-amino-acid chain: Acyl-[acyl-carrier-protein]--UDP-N-acetylglucosamine O-acyltransferase (258 aa).

This sequence belongs to the transferase hexapeptide repeat family. LpxA subfamily. As to quaternary structure, homotrimer.

It localises to the cytoplasm. The enzyme catalyses a (3R)-hydroxyacyl-[ACP] + UDP-N-acetyl-alpha-D-glucosamine = a UDP-3-O-[(3R)-3-hydroxyacyl]-N-acetyl-alpha-D-glucosamine + holo-[ACP]. Its pathway is glycolipid biosynthesis; lipid IV(A) biosynthesis; lipid IV(A) from (3R)-3-hydroxytetradecanoyl-[acyl-carrier-protein] and UDP-N-acetyl-alpha-D-glucosamine: step 1/6. Its function is as follows. Involved in the biosynthesis of lipid A, a phosphorylated glycolipid that anchors the lipopolysaccharide to the outer membrane of the cell. The polypeptide is Acyl-[acyl-carrier-protein]--UDP-N-acetylglucosamine O-acyltransferase (Stutzerimonas stutzeri (strain A1501) (Pseudomonas stutzeri)).